Consider the following 173-residue polypeptide: MSIILGIDPGSRVTGYGVIRQNGRHLQYLGSGCIRTSEKDLPGRLKQIYAGVTEIITQFQPDVFAIEQVFMAKNADSALKLGQARGAAIVSAVNHDLPVYEYAARLIKQAVVGTGGADKAQVQHMVQHMLKLPAKPQADAADALGVAICHANTNKTLIALAGQATSAKRGRYR.

Catalysis depends on residues D8, E67, and D139. Residues D8, E67, and D139 each contribute to the Mg(2+) site.

The protein belongs to the RuvC family. As to quaternary structure, homodimer which binds Holliday junction (HJ) DNA. The HJ becomes 2-fold symmetrical on binding to RuvC with unstacked arms; it has a different conformation from HJ DNA in complex with RuvA. In the full resolvosome a probable DNA-RuvA(4)-RuvB(12)-RuvC(2) complex forms which resolves the HJ. Mg(2+) is required as a cofactor.

The protein resides in the cytoplasm. The enzyme catalyses Endonucleolytic cleavage at a junction such as a reciprocal single-stranded crossover between two homologous DNA duplexes (Holliday junction).. The RuvA-RuvB-RuvC complex processes Holliday junction (HJ) DNA during genetic recombination and DNA repair. Endonuclease that resolves HJ intermediates. Cleaves cruciform DNA by making single-stranded nicks across the HJ at symmetrical positions within the homologous arms, yielding a 5'-phosphate and a 3'-hydroxyl group; requires a central core of homology in the junction. The consensus cleavage sequence is 5'-(A/T)TT(C/G)-3'. Cleavage occurs on the 3'-side of the TT dinucleotide at the point of strand exchange. HJ branch migration catalyzed by RuvA-RuvB allows RuvC to scan DNA until it finds its consensus sequence, where it cleaves and resolves the cruciform DNA. The polypeptide is Crossover junction endodeoxyribonuclease RuvC (Vibrio vulnificus (strain YJ016)).